A 116-amino-acid polypeptide reads, in one-letter code: U11-theraphotoxin-Hhn1c (116 aa).

The N-terminal stretch at 1 to 21 (MNTVRVTFLLVFVLAVSLGQA) is a signal peptide. Residues 22 to 74 (DKDENRMEMQEKTEQGKSYLDFAENLLLQKLEELEAKLLEEDSEESRNSRQKR) constitute a propeptide that is removed on maturation. Residues 61–83 (EEDSEESRNSRQKRCIGEGVPCD) are disordered. Cystine bridges form between C75-C90, C82-C95, and C89-C110.

It belongs to the neurotoxin 14 (magi-1) family. 01 (HNTX-16) subfamily. Expressed by the venom gland.

The protein localises to the secreted. Functionally, probable ion channel inhibitor. This is U11-theraphotoxin-Hhn1c from Cyriopagopus hainanus (Chinese bird spider).